The sequence spans 427 residues: Serine hydroxymethyltransferase (427 aa).

(6S)-5,6,7,8-tetrahydrofolate contacts are provided by residues Leu122 and 126 to 128 (GHL). Residue Lys231 is modified to N6-(pyridoxal phosphate)lysine. (6S)-5,6,7,8-tetrahydrofolate is bound by residues Glu247 and 355-357 (SPF).

It belongs to the SHMT family. Homodimer. Requires pyridoxal 5'-phosphate as cofactor.

Its subcellular location is the cytoplasm. The enzyme catalyses (6R)-5,10-methylene-5,6,7,8-tetrahydrofolate + glycine + H2O = (6S)-5,6,7,8-tetrahydrofolate + L-serine. It participates in one-carbon metabolism; tetrahydrofolate interconversion. Its pathway is amino-acid biosynthesis; glycine biosynthesis; glycine from L-serine: step 1/1. Catalyzes the reversible interconversion of serine and glycine with tetrahydrofolate (THF) serving as the one-carbon carrier. This reaction serves as the major source of one-carbon groups required for the biosynthesis of purines, thymidylate, methionine, and other important biomolecules. Also exhibits THF-independent aldolase activity toward beta-hydroxyamino acids, producing glycine and aldehydes, via a retro-aldol mechanism. This Microcystis aeruginosa (strain NIES-843 / IAM M-2473) protein is Serine hydroxymethyltransferase.